The following is a 217-amino-acid chain: Protein-L-isoaspartate O-methyltransferase (217 aa).

Ser65 is an active-site residue.

It belongs to the methyltransferase superfamily. L-isoaspartyl/D-aspartyl protein methyltransferase family.

The protein resides in the cytoplasm. The catalysed reaction is [protein]-L-isoaspartate + S-adenosyl-L-methionine = [protein]-L-isoaspartate alpha-methyl ester + S-adenosyl-L-homocysteine. Its function is as follows. Catalyzes the methyl esterification of L-isoaspartyl residues in peptides and proteins that result from spontaneous decomposition of normal L-aspartyl and L-asparaginyl residues. It plays a role in the repair and/or degradation of damaged proteins. This Chlorobium limicola (strain DSM 245 / NBRC 103803 / 6330) protein is Protein-L-isoaspartate O-methyltransferase.